A 405-amino-acid polypeptide reads, in one-letter code: L-carnitine CoA-transferase (405 aa).

CoA is bound by residues lysine 97 and arginine 104. Aspartate 169 (nucleophile) is an active-site residue.

Belongs to the CoA-transferase III family. CaiB subfamily. Homodimer.

Its subcellular location is the cytoplasm. The catalysed reaction is crotonobetainyl-CoA + (R)-carnitine = crotonobetaine + (R)-carnitinyl-CoA. It catalyses the reaction 4-(trimethylamino)butanoyl-CoA + (R)-carnitine = (R)-carnitinyl-CoA + 4-(trimethylamino)butanoate. The protein operates within amine and polyamine metabolism; carnitine metabolism. Catalyzes the reversible transfer of the CoA moiety from gamma-butyrobetainyl-CoA to L-carnitine to generate L-carnitinyl-CoA and gamma-butyrobetaine. Is also able to catalyze the reversible transfer of the CoA moiety from gamma-butyrobetainyl-CoA or L-carnitinyl-CoA to crotonobetaine to generate crotonobetainyl-CoA. This chain is L-carnitine CoA-transferase, found in Shigella flexneri serotype 5b (strain 8401).